A 448-amino-acid polypeptide reads, in one-letter code: N-succinylarginine dihydrolase (448 aa).

Residues Ala20 to Ser29, Asn111, and His138 to Arg139 each bind substrate. The active site involves Glu175. Arg213 lines the substrate pocket. His249 is a catalytic residue. The substrate site is built by Asp251 and Asn360. Cys366 serves as the catalytic Nucleophile.

It belongs to the succinylarginine dihydrolase family. Homodimer.

It carries out the reaction N(2)-succinyl-L-arginine + 2 H2O + 2 H(+) = N(2)-succinyl-L-ornithine + 2 NH4(+) + CO2. Its pathway is amino-acid degradation; L-arginine degradation via AST pathway; L-glutamate and succinate from L-arginine: step 2/5. Functionally, catalyzes the hydrolysis of N(2)-succinylarginine into N(2)-succinylornithine, ammonia and CO(2). This chain is N-succinylarginine dihydrolase, found in Shigella dysenteriae serotype 1 (strain Sd197).